Consider the following 570-residue polypeptide: Endo-1,4-beta-xylanase 4 (570 aa).

Residues 1 to 24 (MKRFNYGFFHLVLFLISLLLLGSG) form the signal peptide. 3 N-linked (GlcNAc...) asparagine glycosylation sites follow: asparagine 92, asparagine 190, and asparagine 300. Positions 195 to 494 (EGSVISIEQI…TQAGDLIDKL (300 aa)) constitute a GH10 domain. Catalysis depends on glutamate 325, which acts as the Proton donor. Residue asparagine 339 is glycosylated (N-linked (GlcNAc...) asparagine). Catalysis depends on glutamate 432, which acts as the Nucleophile. A glycan (N-linked (GlcNAc...) asparagine) is linked at asparagine 545.

The protein belongs to the glycosyl hydrolase 10 (cellulase F) family.

The enzyme catalyses Endohydrolysis of (1-&gt;4)-beta-D-xylosidic linkages in xylans.. The protein operates within glycan degradation; xylan degradation. Its function is as follows. Binds to and hydrolyzes insoluble and soluble xylan substrates. This Arabidopsis thaliana (Mouse-ear cress) protein is Endo-1,4-beta-xylanase 4.